A 237-amino-acid polypeptide reads, in one-letter code: tRNA1(Val) (adenine(37)-N6)-methyltransferase (237 aa).

Belongs to the methyltransferase superfamily. tRNA (adenine-N(6)-)-methyltransferase family.

It localises to the cytoplasm. The catalysed reaction is adenosine(37) in tRNA1(Val) + S-adenosyl-L-methionine = N(6)-methyladenosine(37) in tRNA1(Val) + S-adenosyl-L-homocysteine + H(+). In terms of biological role, specifically methylates the adenine in position 37 of tRNA(1)(Val) (anticodon cmo5UAC). The protein is tRNA1(Val) (adenine(37)-N6)-methyltransferase of Bacteroides thetaiotaomicron (strain ATCC 29148 / DSM 2079 / JCM 5827 / CCUG 10774 / NCTC 10582 / VPI-5482 / E50).